Consider the following 153-residue polypeptide: MARNTLSSRFRRVDIDEFDENKFVDEQEEAAAAAAEPGPDPSEVDGLLRQGDMLRAFHAALRNSPVNTKNQAVKERAQGVVLKVLTNFKSSEIEQAVQSLDRNGVDLLMKYIYKGFEKPTENSSAVLLQWHEKALAVGGLGSIIRVLTARKTV.

Serine 64 is modified (phosphoserine).

It belongs to the ARPC5 family. In terms of assembly, may be a component of the Arp2/3 complex in which it may replace ARPC5.

Its subcellular location is the cytoplasm. The protein resides in the cytoskeleton. Its function is as follows. May function as component of the Arp2/3 complex which is involved in regulation of actin polymerization and together with an activating nucleation-promoting factor (NPF) mediates the formation of branched actin networks. This chain is Actin-related protein 2/3 complex subunit 5-like protein (ARPC5L), found in Pongo abelii (Sumatran orangutan).